A 365-amino-acid chain; its full sequence is S-adenosylmethionine:tRNA ribosyltransferase-isomerase (365 aa).

This sequence belongs to the QueA family. As to quaternary structure, monomer.

It is found in the cytoplasm. The enzyme catalyses 7-aminomethyl-7-carbaguanosine(34) in tRNA + S-adenosyl-L-methionine = epoxyqueuosine(34) in tRNA + adenine + L-methionine + 2 H(+). It participates in tRNA modification; tRNA-queuosine biosynthesis. Its function is as follows. Transfers and isomerizes the ribose moiety from AdoMet to the 7-aminomethyl group of 7-deazaguanine (preQ1-tRNA) to give epoxyqueuosine (oQ-tRNA). The chain is S-adenosylmethionine:tRNA ribosyltransferase-isomerase from Rickettsia conorii (strain ATCC VR-613 / Malish 7).